The sequence spans 397 residues: Acetate kinase (397 aa).

Asparagine 8 contributes to the Mg(2+) binding site. Lysine 15 is a binding site for ATP. Arginine 89 is a substrate binding site. Catalysis depends on aspartate 146, which acts as the Proton donor/acceptor. Residues histidine 206–glycine 210, aspartate 281–arginine 283, and glycine 329–asparagine 333 contribute to the ATP site. Mg(2+) is bound at residue glutamate 382.

This sequence belongs to the acetokinase family. In terms of assembly, homodimer. Mg(2+) is required as a cofactor. The cofactor is Mn(2+).

The protein resides in the cytoplasm. It catalyses the reaction acetate + ATP = acetyl phosphate + ADP. It functions in the pathway metabolic intermediate biosynthesis; acetyl-CoA biosynthesis; acetyl-CoA from acetate: step 1/2. Functionally, catalyzes the formation of acetyl phosphate from acetate and ATP. Can also catalyze the reverse reaction. The sequence is that of Acetate kinase from Bacillus cytotoxicus (strain DSM 22905 / CIP 110041 / 391-98 / NVH 391-98).